Here is a 520-residue protein sequence, read N- to C-terminus: Bifunctional dihydrofolate reductase-thymidylate synthase (520 aa).

One can recognise a DHFR domain in the interval 26 to 229; the sequence is AFSIVVALDM…LEFEICKYVP (204 aa). A substrate-binding site is contributed by Val30. Residues Ala32 and 38-44 each bind NADP(+); that span reads GIGDGES. Asp52 contributes to the substrate binding site. Residues 81–83, 102–105, and 157–164 each bind NADP(+); these read RKT, LSSK, and GGAQVYAD. Residues Tyr162 and Thr180 each contribute to the substrate site. Residues 234–520 are thymidylate synthase; that stretch reads ERQYLELIDR…HPAIKMEMAV (287 aa). Arg254 provides a ligand contact to dUMP. Cys400 is a catalytic residue. DUMP contacts are provided by residues His401, 421–425, Asn433, and 463–465; these read QRSCD and HVY.

This sequence in the N-terminal section; belongs to the dihydrofolate reductase family. In the C-terminal section; belongs to the thymidylate synthase family.

The enzyme catalyses (6S)-5,6,7,8-tetrahydrofolate + NADP(+) = 7,8-dihydrofolate + NADPH + H(+). It catalyses the reaction dUMP + (6R)-5,10-methylene-5,6,7,8-tetrahydrofolate = 7,8-dihydrofolate + dTMP. The protein operates within cofactor biosynthesis; tetrahydrofolate biosynthesis; 5,6,7,8-tetrahydrofolate from 7,8-dihydrofolate: step 1/1. Its function is as follows. Bifunctional enzyme. Involved in de novo dTMP biosynthesis. Key enzyme in folate metabolism. Catalyzes an essential reaction for de novo glycine and purine synthesis, DNA precursor synthesis, and for the conversion of dUMP to dTMP. The polypeptide is Bifunctional dihydrofolate reductase-thymidylate synthase (Leishmania major).